A 67-amino-acid polypeptide reads, in one-letter code: MAELPVAPCVRILKKAGAQRVSEAAGKYFAEALEEIALEIARKSVDLAKHAKRKTVKVEDVKAALRG.

Interaction with DNA regions lie at residues 20–22 and 54–57; these read RVS and KTVK.

The protein belongs to the archaeal histone HMF family. Homodimer or heterodimer with another histone. Dimers then assemble into higher oligomers, with the DNA wrapped around the protein core.

The protein resides in the cytoplasm. It localises to the chromosome. Functionally, binds and compact DNA (95 to 150 base pairs) to form nucleosome-like structures that contain positive DNA supercoils. Increases the resistance of DNA to thermal denaturation (in vitro). The polypeptide is Probable archaeal histone 3 (Methanocaldococcus jannaschii (strain ATCC 43067 / DSM 2661 / JAL-1 / JCM 10045 / NBRC 100440) (Methanococcus jannaschii)).